The sequence spans 805 residues: MSSSSWLLLSLVAVTAAQSTIEEQAKTFLDKFNHEAEDLFYQSSLASWNYNTNITEENVQNMNNAGDKWSAFLKEQSTLAQMYPLQEIQNLTVKLQLQALQQNGSSVLSEDKSKRLNTILNTMSTIYSTGKVCNPDNPQECLLLEPGLNEIMANSLDYNERLWAWESWRSEVGKQLRPLYEEYVVLKNEMARANHYEDYGDYWRGDYEVNGVDGYDYSRGQLIEDVEHTFEEIKPLYEHLHAYVRAKLMNAYPSYISPIGCLPAHLLGDMWGRFWTNLYSLTVPFGQKPNIDVTDAMVDQAWDAQRIFKEAEKFFVSVGLPNMTQGFWENSMLTDPGNVQKAVCHPTAWDLGKGDFRILMCTKVTMDDFLTAHHEMGHIQYDMAYAAQPFLLRNGANEGFHEAVGEIMSLSAATPKHLKSIGLLSPDFQEDNETEINFLLKQALTIVGTLPFTYMLEKWRWMVFKGEIPKDQWMKKWWEMKREIVGVVEPVPHDETYCDPASLFHVSNDYSFIRYYTRTLYQFQFQEALCQAAKHEGPLHKCDISNSTEAGQKLFNMLRLGKSEPWTLALENVVGAKNMNVRPLLNYFEPLFTWLKDQNKNSFVGWSTDWSPYADQSIKVRISLKSALGDKAYEWNDNEMYLFRSSVAYAMRQYFLKVKNQMILFGEEDVRVANLKPRISFNFFVTAPKNVSDIIPRTEVEKAIRMSRSRINDAFRLNDNSLEFLGIQPTLGPPNQPPVSIWLIVFGVVMGVIVVGIVILIFTGIRDRKKKNKARSGENPYASIDISKGENNPGFQNTDDVQTSF.

The signal sequence occupies residues 1 to 17 (MSSSSWLLLSLVAVTAA). Over 18 to 740 (QSTIEEQAKT…LGPPNQPPVS (723 aa)) the chain is Extracellular. Positions 19 to 607 (STIEEQAKTF…QNKNSFVGWS (589 aa)) constitute a Peptidase M2 domain. The segment at 30 to 41 (DKFNHEAEDLFY) is interaction with SARS-CoV spike glycoprotein. A glycan (N-linked (GlcNAc...) asparagine) is linked at N53. The interval 82-84 (MYP) is interaction with SARS-CoV spike glycoprotein. N-linked (GlcNAc...) asparagine glycans are attached at residues N90 and N103. C133 and C141 are oxidised to a cystine. A chloride-binding site is contributed by R169. Substrate is bound at residue R273. A glycan (N-linked (GlcNAc...) asparagine) is linked at N322. Cysteines 344 and 361 form a disulfide. 345–346 (HP) is a substrate binding site. The tract at residues 353–357 (KGDFR) is interaction with SARS-CoV spike glycoprotein. H374 contacts Zn(2+). The active-site Proton acceptor is E375. 2 residues coordinate Zn(2+): H378 and E402. N-linked (GlcNAc...) asparagine glycosylation occurs at N432. Chloride is bound by residues W477 and K481. Residue H505 is the Proton donor of the active site. A substrate-binding site is contributed by Y515. C530 and C542 form a disulfide bridge. N-linked (GlcNAc...) asparagine glycosylation occurs at N546. A Collectrin-like domain is found at 614-805 (ADQSIKVRIS…QNTDDVQTSF (192 aa)). The interval 652–659 (RQYFLKVK) is essential for cleavage by ADAM17. N690 is a glycosylation site (N-linked (GlcNAc...) asparagine). The segment at 697-716 (RTEVEKAIRMSRSRINDAFR) is essential for cleavage by TMPRSS11D and TMPRSS2. A helical membrane pass occupies residues 741 to 761 (IWLIVFGVVMGVIVVGIVILI). Residues 762 to 805 (FTGIRDRKKKNKARSGENPYASIDISKGENNPGFQNTDDVQTSF) are Cytoplasmic-facing. Residues 772–805 (NKARSGENPYASIDISKGENNPGFQNTDDVQTSF) are disordered. The LIR motif lies at 778-786 (ENPYASIDI). Position 781 is a phosphotyrosine (Y781). Positions 781 to 784 (YASI) match the Endocytic sorting signal motif. The SH2-binding motif lies at 781 to 785 (YASID). The residue at position 783 (S783) is a Phosphoserine. Residue K788 forms a Glycyl lysine isopeptide (Lys-Gly) (interchain with G-Cter in ubiquitin) linkage. Residues 789-805 (GENNPGFQNTDDVQTSF) show a composition bias toward polar residues. The short motif at 792–795 (NPGF) is the PTB element. The PDZ-binding motif lies at 803-805 (TSF).

It belongs to the peptidase M2 family. In terms of assembly, homodimer. Interacts with the catalytically active form of TMPRSS2. Interacts with SLC6A19; this interaction is essential for expression and function of SLC6A19 in intestine. Interacts with ITGA5:ITGB1. Probably interacts (via endocytic sorting signal motif) with AP2M1; the interaction is inhibited by phosphorylation of Tyr-781. Interacts (via PDZ-binding motif) with NHERF1 (via PDZ domains); the interaction may enhance ACE2 membrane residence. (Microbial infection) Interacts with SARS coronavirus/SARS-CoV spike protein. As to quaternary structure, (Microbial infection) Interacts with SARS coronavirus-2/SARS-CoV-2 spike protein (via RBD domain). In terms of assembly, (Microbial infection) Interacts with human coronavirus NL63 spike protein. (Microbial infection) Interacts with human coronavirus NL63/HCoV-NL63 spike glycoprotein. As to quaternary structure, (Microbial infection) Interacts with SARS coronavirus-2/SARS-CoV-2 spike protein; the interaction is increased by AVP/Arg-vasopressin with which they may form a complex. Zn(2+) is required as a cofactor. It depends on chloride as a cofactor. N-glycosylation on Asn-90 may limit SARS infectivity. In terms of processing, proteolytic cleavage by ADAM17 generates a secreted form. Also cleaved by serine proteases: TMPRSS2, TMPRSS11D and HPN/TMPRSS1. Post-translationally, phosphorylated. Phosphorylation at Tyr-781 probably inhibits interaction with AP2M1 and enables interactions with proteins containing SH2 domains. Ubiquitinated. Ubiquitinated on Lys-788 via 'Lys-48'-linked ubiquitin. 'Lys-48'-linked deubiquitinated by USP50 on the Lys-788; leading to its stabilization. In terms of tissue distribution, expressed in endothelial cells from small and large arteries, and in arterial smooth muscle cells (at protein level). Expressed in enterocytes of the small intestine, Leydig cells and Sertoli cells (at protein level). Expressed in the renal proximal tubule and the small intestine (at protein level). Expressed in heart, kidney, testis, and gastrointestinal system (at protein level). In lung, expressed at low levels in some alveolar type 2 cells, the expression seems to be individual-specific (at protein level). Expressed in nasal epithelial cells (at protein level). Coexpressed with TMPRSS2 within some lung alveolar type 2 cells, ileal absorptive enterocytes, intestinal epithelial cells, cornea, gallbladder and nasal goblet secretory cells. Coexpressed with TMPRSS4 within mature enterocytes. Expressed in nasal and bronchial epithelial cells (at protein level).

The protein resides in the secreted. Its subcellular location is the cell membrane. It is found in the cytoplasm. It localises to the cell projection. The protein localises to the cilium. The protein resides in the apical cell membrane. The enzyme catalyses angiotensin II + H2O = angiotensin-(1-7) + L-phenylalanine. It carries out the reaction angiotensin I + H2O = angiotensin-(1-9) + L-leucine. It catalyses the reaction bradykinin(1-8) + H2O = bradykinin(1-7) + L-phenylalanine. The catalysed reaction is neurotensin + H2O = neurotensin-(1-12) + L-leucine. The enzyme catalyses neurotensin-(1-8) + H2O = neurotensin-(1-7) + L-arginine. It carries out the reaction kinetensin + H2O = kinetensin-(1-8) + L-leucine. It catalyses the reaction dynorphin A-(1-13) + H2O = dynorphin A-(1-12) + L-lysine. The catalysed reaction is apelin-13 + H2O = apelin-12 + L-phenylalanine. The enzyme catalyses [Pyr1]apelin-13 + H2O = [Pyr1]apelin-12 + L-phenylalanine. It carries out the reaction apelin-17 + H2O = apelin-16 + L-phenylalanine. It catalyses the reaction beta-casomorphin-7 + H2O = beta-casomorphin-6 + L-isoleucine. The catalysed reaction is neocasomorphin + H2O = neocasomorphin-(1-5) + L-isoleucine. With respect to regulation, regulated by chloride and fluoride, but not bromide. Chloride increases angiotensin I and decreases angiotensin II cleavage. Inhibited by MLN-4760, cFP_Leu, and EDTA, but not by the ACE inhibitors lisinopril, captopril and enalaprilat. Highly potent and selective in vitro ACE2 inhibitors were identified. Functionally, essential counter-regulatory carboxypeptidase of the renin-angiotensin hormone system that is a critical regulator of blood volume, systemic vascular resistance, and thus cardiovascular homeostasis. Converts angiotensin I to angiotensin 1-9, a nine-amino acid peptide with anti-hypertrophic effects in cardiomyocytes, and angiotensin II to angiotensin 1-7, which then acts as a beneficial vasodilator and anti-proliferation agent, counterbalancing the actions of the vasoconstrictor angiotensin II. Also removes the C-terminal residue from three other vasoactive peptides, neurotensin, kinetensin, and des-Arg bradykinin, but is not active on bradykinin. Also cleaves other biological peptides, such as apelins (apelin-13, [Pyr1]apelin-13, apelin-17, apelin-36), casomorphins (beta-casomorphin-7, neocasomorphin) and dynorphin A with high efficiency. In addition, ACE2 C-terminus is homologous to collectrin and is responsible for the trafficking of the neutral amino acid transporter SL6A19 to the plasma membrane of gut epithelial cells via direct interaction, regulating its expression on the cell surface and its catalytic activity. In terms of biological role, (Microbial infection) Acts as a receptor for human coronaviruses SARS-CoV and SARS-CoV-2, as well as human coronavirus NL63/HCoV-NL63. Its function is as follows. Non-functional as a carboxypeptidase. (Microbial infection) Non-functional as a receptor for human coronavirus SARS-CoV-2. The sequence is that of Angiotensin-converting enzyme 2 from Homo sapiens (Human).